We begin with the raw amino-acid sequence, 536 residues long: MLSRSSFTSLAVGVFAVYVAHTCWVMYGIVYTRPCPSGGAAACVWPYLARRPKLQLSVYTTTRSNIGAESNIDLVLNVEDFDIESKFERTVNVSVPKKTRNNGTLYAYIFLHHAGVLPWHDGKQVHIVSPLTTYMVPKPEEINLLTGESTTQQIEAEKQTSALDEPVSHWRSRLTLNVMVEDFVFDGSSLPADVHRYMKMVQLGKTVHYLPILFIDQLSNRVKDLMVINRSTTELPLTVSYDKISLGKLRFWIHMQDAVYSLQQFGFSEKDADEVKGIFVDTNLYFLALTFFVAAFHLLFDFLAFKNDISFWKKKRSMIGMSTKAVLWRCFSTVVIFLFLLDEQTSLLVLIPAGIGAVIELWKVKKALKMTVKWQGIRPKVQFGASNDSEKKTEEYDTQAMKYLSYLLYPLCIGGAAYSLLNVKYKSWYSWLINSFVNGVYAFGFLFMLPQLFVNYKMKSVAHLPWKAFTYKAFNTFIDDIFAFIITMPTSHRLACFRDDVVFLVYLYQRWLYPVDKSRVNEYGESYEEKPKKKSS.

Residues 1–9 (MLSRSSFTS) are Cytoplasmic-facing. A helical transmembrane segment spans residues 10-30 (LAVGVFAVYVAHTCWVMYGIV). Residues 31 to 284 (YTRPCPSGGA…VKGIFVDTNL (254 aa)) lie on the Extracellular side of the membrane. N-linked (GlcNAc...) asparagine glycosylation is found at Asn92, Asn102, and Asn229. A helical membrane pass occupies residues 285–305 (YFLALTFFVAAFHLLFDFLAF). The Cytoplasmic segment spans residues 306–324 (KNDISFWKKKRSMIGMSTK). Residues 325 to 342 (AVLWRCFSTVVIFLFLLD) form a helical membrane-spanning segment. Over 343-346 (EQTS) the chain is Extracellular. Residues 347-364 (LLVLIPAGIGAVIELWKV) traverse the membrane as a helical segment. Residues 365–402 (KKALKMTVKWQGIRPKVQFGASNDSEKKTEEYDTQAMK) lie on the Cytoplasmic side of the membrane. Residues 403-423 (YLSYLLYPLCIGGAAYSLLNV) traverse the membrane as a helical segment. The Extracellular portion of the chain corresponds to 424 to 428 (KYKSW). The helical transmembrane segment at 429–449 (YSWLINSFVNGVYAFGFLFML) threads the bilayer. Topologically, residues 450 to 536 (PQLFVNYKMK…YEEKPKKKSS (87 aa)) are cytoplasmic.

Belongs to the CLPTM1 family.

The protein localises to the endoplasmic reticulum membrane. The enzyme catalyses a 6-(alpha-D-glucosaminyl)-1-(1,2-diacyl-sn-glycero-3-phospho)-1D-myo-inositol(in) = a 6-(alpha-D-glucosaminyl)-1-(1,2-diacyl-sn-glycero-3-phospho)-1D-myo-inositol(out). The catalysed reaction is 6-(alpha-D-glucosaminyl)-(1-octadecanoyl,2-(9Z)-octadecenoyl-sn-glycero-3-phospho)-1D-myo-inositol(in) = 6-(alpha-D-glucosaminyl)-(1-octadecanoyl,2-(9Z)-octadecenoyl-sn-glycero-3-phospho)-1D-myo-inositol(out). It catalyses the reaction a 1,2-diacyl-sn-glycero-3-phospho-(1D-myo-inositol)(in) = a 1,2-diacyl-sn-glycero-3-phospho-(1D-myo-inositol)(out). It carries out the reaction a 1,2-diacyl-sn-glycero-3-phosphocholine(in) = a 1,2-diacyl-sn-glycero-3-phosphocholine(out). The enzyme catalyses a 1,2-diacyl-sn-glycero-3-phosphoethanolamine(in) = a 1,2-diacyl-sn-glycero-3-phosphoethanolamine(out). Its function is as follows. Scramblase that mediates the translocation of glucosaminylphosphatidylinositol (alpha-D-GlcN-(1-6)-(1,2-diacyl-sn-glycero-3-phospho)-1D-myo-inositol, GlcN-PI) across the endoplasmic reticulum (ER) membrane, from the cytosolic leaflet to the luminal leaflet of the ER membrane, where it participates in the biosynthesis of glycosylphosphatidylinositol (GPI). GPI is a lipid glycoconjugate involved in post-translational modification of proteins. Can also translocate 1,2-diacyl-sn-glycero-3-phospho-(1D-myo-inositol) (phosphatidylinositol or PI), as well as several other phospholipids (1,2-diacyl-sn-glycero-3-phosphocholine, 1,2-diacyl-sn-glycero-3-phosphoethanolamine), and N-acetylglucosaminylphosphatidylinositol (GlcNAc-PI) in vitro. The chain is Lipid scramblase CLPTM1L (CLPTM1L) from Gallus gallus (Chicken).